A 91-amino-acid polypeptide reads, in one-letter code: Small ribosomal subunit protein uS19 (91 aa).

This sequence belongs to the universal ribosomal protein uS19 family.

Functionally, protein S19 forms a complex with S13 that binds strongly to the 16S ribosomal RNA. This is Small ribosomal subunit protein uS19 from Lactobacillus delbrueckii subsp. bulgaricus (strain ATCC 11842 / DSM 20081 / BCRC 10696 / JCM 1002 / NBRC 13953 / NCIMB 11778 / NCTC 12712 / WDCM 00102 / Lb 14).